A 247-amino-acid chain; its full sequence is uncharacterized protein (247 aa).

The protein to M.pneumoniae MPN_635 N-terminal region.

This is an uncharacterized protein from Mycoplasma pneumoniae (strain ATCC 29342 / M129 / Subtype 1) (Mycoplasmoides pneumoniae).